The primary structure comprises 116 residues: Putative transmembrane protein ORF116 (116 aa).

Helical transmembrane passes span 20–40 (IVTL…AYAL), 53–73 (LLGG…TNSI), and 76–96 (FRGA…DVIN).

It localises to the host membrane. The polypeptide is Putative transmembrane protein ORF116 (Acidianus bottle-shaped virus (isolate Italy/Pozzuoli) (ABV)).